A 122-amino-acid polypeptide reads, in one-letter code: UPF0102 protein RHE_CH00320 (122 aa).

Belongs to the UPF0102 family.

The chain is UPF0102 protein RHE_CH00320 from Rhizobium etli (strain ATCC 51251 / DSM 11541 / JCM 21823 / NBRC 15573 / CFN 42).